A 476-amino-acid polypeptide reads, in one-letter code: Aspartyl/glutamyl-tRNA(Asn/Gln) amidotransferase subunit B (476 aa).

The protein belongs to the GatB/GatE family. GatB subfamily. Heterotrimer of A, B and C subunits.

It carries out the reaction L-glutamyl-tRNA(Gln) + L-glutamine + ATP + H2O = L-glutaminyl-tRNA(Gln) + L-glutamate + ADP + phosphate + H(+). The catalysed reaction is L-aspartyl-tRNA(Asn) + L-glutamine + ATP + H2O = L-asparaginyl-tRNA(Asn) + L-glutamate + ADP + phosphate + 2 H(+). In terms of biological role, allows the formation of correctly charged Asn-tRNA(Asn) or Gln-tRNA(Gln) through the transamidation of misacylated Asp-tRNA(Asn) or Glu-tRNA(Gln) in organisms which lack either or both of asparaginyl-tRNA or glutaminyl-tRNA synthetases. The reaction takes place in the presence of glutamine and ATP through an activated phospho-Asp-tRNA(Asn) or phospho-Glu-tRNA(Gln). This Lactobacillus gasseri (strain ATCC 33323 / DSM 20243 / BCRC 14619 / CIP 102991 / JCM 1131 / KCTC 3163 / NCIMB 11718 / NCTC 13722 / AM63) protein is Aspartyl/glutamyl-tRNA(Asn/Gln) amidotransferase subunit B.